Consider the following 601-residue polypeptide: Elongation factor 4 (601 aa).

The tr-type G domain maps to 6-188; that stretch reads SRTRNFSIIA…DIVKNVPPPK (183 aa). GTP-binding positions include 18-23 and 135-138; these read DHGKST and NKID.

This sequence belongs to the TRAFAC class translation factor GTPase superfamily. Classic translation factor GTPase family. LepA subfamily.

The protein localises to the cell membrane. It carries out the reaction GTP + H2O = GDP + phosphate + H(+). Its function is as follows. Required for accurate and efficient protein synthesis under certain stress conditions. May act as a fidelity factor of the translation reaction, by catalyzing a one-codon backward translocation of tRNAs on improperly translocated ribosomes. Back-translocation proceeds from a post-translocation (POST) complex to a pre-translocation (PRE) complex, thus giving elongation factor G a second chance to translocate the tRNAs correctly. Binds to ribosomes in a GTP-dependent manner. The sequence is that of Elongation factor 4 from Clostridioides difficile (strain 630) (Peptoclostridium difficile).